A 113-amino-acid chain; its full sequence is Large ribosomal subunit protein bL19 (113 aa).

It belongs to the bacterial ribosomal protein bL19 family.

Functionally, this protein is located at the 30S-50S ribosomal subunit interface and may play a role in the structure and function of the aminoacyl-tRNA binding site. This Corynebacterium efficiens (strain DSM 44549 / YS-314 / AJ 12310 / JCM 11189 / NBRC 100395) protein is Large ribosomal subunit protein bL19.